We begin with the raw amino-acid sequence, 491 residues long: Sucrose transport protein SUC9 (491 aa).

Positions 1–12 are enriched in basic and acidic residues; the sequence is MSDIQAKEDAAP. The interval 1-26 is disordered; sequence MSDIQAKEDAAPVDRQSSSSVVVPDE. At 1 to 33 the chain is on the cytoplasmic side; it reads MSDIQAKEDAAPVDRQSSSSVVVPDEPSPLRKM. Ser-17 is modified (phosphoserine). Residues 34 to 54 form a helical membrane-spanning segment; that stretch reads ISVASIAAGIQFGWALQLSLL. At 55 to 68 the chain is on the extracellular side; it reads TPYVQLLGVPHKWS. A helical membrane pass occupies residues 69–89; sequence SFIWLCGPISGLLVQPTVGYF. Residues 90–101 lie on the Cytoplasmic side of the membrane; it reads SDRCKSRFGRRR. The helical transmembrane segment at 102-122 threads the bilayer; that stretch reads PFIATGALLVALAVILIGFAA. Topologically, residues 123–139 are extracellular; sequence DFGHTMGDKLDEAVKIR. A helical transmembrane segment spans residues 140 to 160; the sequence is AVGFFVVGFWILDVANNTLQG. At 161-181 the chain is on the cytoplasmic side; sequence PCRAFLGDLAAGDAKKTRTAN. A helical membrane pass occupies residues 182–202; that stretch reads AIFSFFMAVGNVLGYAAGSYT. Over 203–224 the chain is Extracellular; it reads NLHKIFPFTVTKACDIYCANLK. Residues 225 to 245 traverse the membrane as a helical segment; it reads SCFIISITLLIVLTIIALWYV. Residues 246 to 277 are Cytoplasmic-facing; sequence EDKQWSPNADSDNEKTPFFGEIFGAFKVMKRP. The helical transmembrane segment at 278–298 threads the bilayer; it reads MWMLLAVTALNWIAWFPFLLY. At 299–329 the chain is on the extracellular side; that stretch reads DTDWMGREVYGGDSAGDDKMKKLYNHGIQVG. A helical transmembrane segment spans residues 330–350; the sequence is SLGLMLNSIVLGVMSLVIGVI. Residues 351–358 lie on the Cytoplasmic side of the membrane; sequence SKKIGAKR. Residues 359–379 form a helical membrane-spanning segment; the sequence is LWGAVNIILAVCLAMTVLVTK. Topologically, residues 380–406 are extracellular; sequence KAEEHRKIAGRMALPTNAIRDGALSLF. The chain crosses the membrane as a helical span at residues 407–427; it reads AILGIPLAITFSIPFALASII. Topologically, residues 428–443 are cytoplasmic; that stretch reads SSSSGAGQGLSLGVLN. A helical membrane pass occupies residues 444 to 464; sequence MAIVIPQMIVSFGVGPIDALF. Topologically, residues 465–468 are extracellular; the sequence is GGGN. Residues 469–489 form a helical membrane-spanning segment; sequence LPGFVVGAIAALISSVVALTV. Residues 490-491 are Cytoplasmic-facing; sequence LP.

The protein belongs to the glycoside-pentoside-hexuronide (GPH) cation symporter transporter (TC 2.A.2.4) family. As to expression, widely expressed.

It localises to the cell membrane. The enzyme catalyses sucrose(out) + H(+)(out) = sucrose(in) + H(+)(in). It functions in the pathway glycan biosynthesis; sucrose metabolism. Inhibited by protonophores (e.g. carbonyl cyanide m-chlorophenyl-hydrazone (CCCP)) and SH group inhibitors (e.g. p-chloromercuribenzene sulphonic acid (PCMBS)). Functionally, high-affinity sucrose transporter. Responsible for the transport of sucrose into the cell, with the concomitant uptake of protons (symport system). Can also transport a wide range of glucosides, such as helicin, salicin, arbutin, maltose, fraxin, esculin, uranose, alpha-methylglucoside, alpha-phenylglucoside and beta-phenylglucoside. Plays a role in flowering time transition delay. The sequence is that of Sucrose transport protein SUC9 from Arabidopsis thaliana (Mouse-ear cress).